The chain runs to 310 residues: Transcription initiation factor IIB (310 aa).

The TFIIB-type zinc-finger motif lies at 9–41 (EKETKCPECGSDDLRGDYERAEIVCGKCGLVID). Zn(2+) is bound by residues Cys14, Cys17, Cys33, and Cys36. 2 repeat units span residues 127–210 (SELD…TREL) and 221–302 (DYVP…ELTE).

Belongs to the TFIIB family.

In terms of biological role, stabilizes TBP binding to an archaeal box-A promoter. Also responsible for recruiting RNA polymerase II to the pre-initiation complex (DNA-TBP-TFIIB). The sequence is that of Transcription initiation factor IIB from Methanothermobacter thermautotrophicus (strain ATCC 29096 / DSM 1053 / JCM 10044 / NBRC 100330 / Delta H) (Methanobacterium thermoautotrophicum).